The sequence spans 206 residues: Endoplasmic reticulum transmembrane protein YET-like (206 aa).

Residues 1–2 (ME) lie on the Lumenal side of the membrane. Residues 3–23 (FLMTLVFLVLLVEIVFCTFFM) traverse the membrane as a helical segment. The Cytoplasmic portion of the chain corresponds to 24-46 (LPVSMHLRKNVYNKLDKLFGGQN). A helical membrane pass occupies residues 47-67 (AKIFLKVLALLVIIVFCDSIV). Residues 68–101 (NSYNINKKLHTPELTGAKFDRQNEYTRMFRYQRN) lie on the Lumenal side of the membrane. Residues 102-122 (SYICGFCLYLFFLIYRSQGII) form a helical membrane-spanning segment. Over 123 to 206 (SQLSNVEASK…KKPKTQKKDD (84 aa)) the chain is Cytoplasmic. Residues 140-198 (KNNLNTVETLLSENEKLKTEIKDLKKMEKEHKAMKSQAENTTKEYLKLQEEYNQLLGKK) adopt a coiled-coil conformation. A Di-lysine motif motif is present at residues 203-206 (KKDD).

This sequence belongs to the BCAP29/BCAP31 family.

The protein localises to the endoplasmic reticulum membrane. May play a role in anterograde transport of membrane proteins from the endoplasmic reticulum to the Golgi. This Dictyostelium discoideum (Social amoeba) protein is Endoplasmic reticulum transmembrane protein YET-like.